The chain runs to 967 residues: Translation initiation factor IF-2 (967 aa).

The disordered stretch occupies residues alanine 34–proline 363. 2 stretches are compositionally biased toward low complexity: residues proline 51–alanine 96 and alanine 103–proline 154. The segment covering arginine 184–proline 196 has biased composition (gly residues). The span at glycine 197–glycine 206 shows a compositional bias: low complexity. The segment covering proline 300–glycine 333 has biased composition (gly residues). A compositionally biased stretch (basic residues) spans alanine 334–lysine 345. Residues proline 460–glutamate 632 form the tr-type G domain. The segment at glycine 469–threonine 476 is G1. Glycine 469 to threonine 476 contacts GTP. Residues glycine 494 to histidine 498 are G2. Residues aspartate 519 to glycine 522 are G3. Residues aspartate 519–histidine 523 and asparagine 573–aspartate 576 each bind GTP. A G4 region spans residues asparagine 573–aspartate 576. The segment at serine 609–arginine 611 is G5.

It belongs to the TRAFAC class translation factor GTPase superfamily. Classic translation factor GTPase family. IF-2 subfamily.

The protein resides in the cytoplasm. Its function is as follows. One of the essential components for the initiation of protein synthesis. Protects formylmethionyl-tRNA from spontaneous hydrolysis and promotes its binding to the 30S ribosomal subunits. Also involved in the hydrolysis of GTP during the formation of the 70S ribosomal complex. In Kocuria rhizophila (strain ATCC 9341 / DSM 348 / NBRC 103217 / DC2201), this protein is Translation initiation factor IF-2.